The sequence spans 209 residues: NADH-ubiquinone oxidoreductase subunit 9 (209 aa).

It belongs to the complex I 30 kDa subunit family. As to quaternary structure, complex I is composed of about 30 different subunits.

It is found in the mitochondrion inner membrane. It catalyses the reaction a ubiquinone + NADH + 5 H(+)(in) = a ubiquinol + NAD(+) + 4 H(+)(out). Functionally, core subunit of the mitochondrial membrane respiratory chain NADH dehydrogenase (Complex I) that is believed to belong to the minimal assembly required for catalysis. Complex I functions in the transfer of electrons from NADH to the respiratory chain. The immediate electron acceptor for the enzyme is believed to be ubiquinone. The polypeptide is NADH-ubiquinone oxidoreductase subunit 9 (NAD9) (Paramecium primaurelia).